We begin with the raw amino-acid sequence, 324 residues long: Autolytic lysozyme (324 aa).

Catalysis depends on residues Asp5 and Glu91. A run of 5 repeats spans residues 212–234 (LLKR…IKDF), 235–254 (QSIM…SGAA), 255–277 (QQIF…TRYI), 278–300 (QYRV…VAAW), and 301–324 (QSNQ…LDEN). The interval 212–324 (LLKRGLEVDG…ATWSKLLDEN (113 aa)) is 5 X 23 AA tandem repeats.

The protein belongs to the glycosyl hydrolase 25 family. In terms of assembly, monomer.

It is found in the secreted. Its subcellular location is the cytoplasm. The catalysed reaction is Hydrolysis of (1-&gt;4)-beta-linkages between N-acetylmuramic acid and N-acetyl-D-glucosamine residues in a peptidoglycan and between N-acetyl-D-glucosamine residues in chitodextrins.. The chain is Autolytic lysozyme (lyc) from Clostridium acetobutylicum (strain ATCC 824 / DSM 792 / JCM 1419 / IAM 19013 / LMG 5710 / NBRC 13948 / NRRL B-527 / VKM B-1787 / 2291 / W).